A 166-amino-acid chain; its full sequence is Regulatory protein RecX (166 aa).

Belongs to the RecX family.

Its subcellular location is the cytoplasm. In terms of biological role, modulates RecA activity. In Shigella sonnei (strain Ss046), this protein is Regulatory protein RecX.